The sequence spans 86 residues: Toxin Td8 (86 aa).

The signal sequence occupies residues 1 to 20; it reads MTRFVLFLSCFFLIGMVVEC. The LCN-type CS-alpha/beta domain occupies 21-83; it reads KDGYLVGDDG…IWNSATNRCR (63 aa). Disulfide bonds link Cys-31–Cys-82, Cys-35–Cys-57, Cys-43–Cys-63, and Cys-47–Cys-65. Arg-83 carries the arginine amide modification.

As to expression, expressed by the venom gland.

The protein localises to the secreted. Beta toxins bind voltage-independently at site-4 of sodium channels (Nav) and shift the voltage of activation toward more negative potentials thereby affecting sodium channel activation and promoting spontaneous and repetitive firing. The polypeptide is Toxin Td8 (Tityus discrepans (Venezuelan scorpion)).